The primary structure comprises 116 residues: FK506-binding protein 1 (116 aa).

A PPIase FKBP-type domain is found at 19–116 (GDKVSIHYTG…IFEVELLKIN (98 aa)).

It belongs to the FKBP-type PPIase family. FKBP1 subfamily.

Its subcellular location is the cytoplasm. It catalyses the reaction [protein]-peptidylproline (omega=180) = [protein]-peptidylproline (omega=0). Its activity is regulated as follows. Inhibited by both FK506 and rapamycin. Functionally, PPIases accelerate the folding of proteins. It catalyzes the cis-trans isomerization of proline imidic peptide bonds in oligopeptides. The chain is FK506-binding protein 1 (fpr1) from Aspergillus oryzae (strain ATCC 42149 / RIB 40) (Yellow koji mold).